The following is a 255-amino-acid chain: 7alpha-hydroxysteroid dehydrogenase (255 aa).

Residues Ile23, 42–43 (DI), 68–69 (DI), and Asn95 contribute to the NAD(+) site. Positions 99, 146, 151, and 159 each coordinate glycochenodeoxycholate. NAD(+) is bound by residues Tyr159, Lys163, and 192 to 194 (ILT). The active-site Proton acceptor is the Tyr159.

Belongs to the short-chain dehydrogenases/reductases (SDR) family. As to quaternary structure, homotetramer.

The enzyme catalyses cholate + NAD(+) = 3alpha,12alpha-dihydroxy-7-oxo-5beta-cholanate + NADH + H(+). It carries out the reaction chenodeoxycholate + NAD(+) = 7-oxolithocholate + NADH + H(+). It catalyses the reaction taurochenodeoxycholate + NAD(+) = 7-oxotaurolithocholate + NADH + H(+). The catalysed reaction is taurocholate + NAD(+) = 7-oxo-taurodeoxycholate + NADH + H(+). The enzyme catalyses glycocholate + NAD(+) = 7-oxo-glycodeoxycholate + NADH + H(+). It carries out the reaction glycochenodeoxycholate + NAD(+) = 7-oxoglycolithocholate + NADH + H(+). Functionally, 7alpha-hydroxysteroid dehydrogenase involved in the metabolism of bile acids. Catalyzes the NAD(+)-dependent oxidation of the 7alpha-hydroxy group of 7alpha-hydroxysteroids, such as the major human bile acids cholate and chenodeoxycholate, to the corresponding 7-oxosteroids. To a lesser extent, can also act on taurochenodeoxycholate, taurocholate and glycocholate. Can also use glycochenodeoxycholate as substrate. Is not able to use NADP(+) instead of NAD(+) as the electron acceptor. This chain is 7alpha-hydroxysteroid dehydrogenase (hdhA), found in Escherichia coli O157:H7.